The sequence spans 695 residues: Glycine--tRNA ligase beta subunit (695 aa).

Belongs to the class-II aminoacyl-tRNA synthetase family. As to quaternary structure, tetramer of two alpha and two beta subunits.

It is found in the cytoplasm. It catalyses the reaction tRNA(Gly) + glycine + ATP = glycyl-tRNA(Gly) + AMP + diphosphate. The polypeptide is Glycine--tRNA ligase beta subunit (Lawsonia intracellularis (strain PHE/MN1-00)).